A 432-amino-acid polypeptide reads, in one-letter code: Adenylosuccinate synthetase (432 aa).

GTP-binding positions include 12 to 18 and 40 to 42; these read GDEGKGK and GHT. Residue aspartate 13 is the Proton acceptor of the active site. Residues aspartate 13 and glycine 40 each coordinate Mg(2+). IMP-binding positions include 13-16, 38-41, threonine 130, arginine 144, glutamine 225, threonine 240, and arginine 304; these read DEGK and NAGH. Histidine 41 (proton donor) is an active-site residue. 300 to 306 lines the substrate pocket; that stretch reads STTGRPR. GTP-binding positions include arginine 306, 332–334, and 414–416; these read KLD and SVG.

This sequence belongs to the adenylosuccinate synthetase family. Homodimer. It depends on Mg(2+) as a cofactor.

It is found in the cytoplasm. The catalysed reaction is IMP + L-aspartate + GTP = N(6)-(1,2-dicarboxyethyl)-AMP + GDP + phosphate + 2 H(+). The protein operates within purine metabolism; AMP biosynthesis via de novo pathway; AMP from IMP: step 1/2. Functionally, plays an important role in the de novo pathway of purine nucleotide biosynthesis. Catalyzes the first committed step in the biosynthesis of AMP from IMP. The sequence is that of Adenylosuccinate synthetase from Citrifermentans bemidjiense (strain ATCC BAA-1014 / DSM 16622 / JCM 12645 / Bem) (Geobacter bemidjiensis).